Consider the following 190-residue polypeptide: Threonylcarbamoyl-AMP synthase (190 aa).

One can recognise a YrdC-like domain in the interval 7 to 190; the sequence is RDAIAAAIDV…ALTGELFRQG (184 aa).

The protein belongs to the SUA5 family. TsaC subfamily.

The protein resides in the cytoplasm. The enzyme catalyses L-threonine + hydrogencarbonate + ATP = L-threonylcarbamoyladenylate + diphosphate + H2O. Functionally, required for the formation of a threonylcarbamoyl group on adenosine at position 37 (t(6)A37) in tRNAs that read codons beginning with adenine. Catalyzes the conversion of L-threonine, HCO(3)(-)/CO(2) and ATP to give threonylcarbamoyl-AMP (TC-AMP) as the acyladenylate intermediate, with the release of diphosphate. This Escherichia coli O9:H4 (strain HS) protein is Threonylcarbamoyl-AMP synthase.